The sequence spans 463 residues: Phosphomethylpyrimidine synthase (463 aa).

Substrate-binding positions include N80, M109, Y138, H173, 193 to 195 (SRG), 234 to 237 (DGLR), and E273. H277 provides a ligand contact to Zn(2+). Y300 contacts substrate. H341 contacts Zn(2+). C421, C424, and C429 together coordinate [4Fe-4S] cluster.

It belongs to the ThiC family. In terms of assembly, homodimer. Requires [4Fe-4S] cluster as cofactor.

It carries out the reaction 5-amino-1-(5-phospho-beta-D-ribosyl)imidazole + S-adenosyl-L-methionine = 4-amino-2-methyl-5-(phosphooxymethyl)pyrimidine + CO + 5'-deoxyadenosine + formate + L-methionine + 3 H(+). It functions in the pathway cofactor biosynthesis; thiamine diphosphate biosynthesis. Its function is as follows. Catalyzes the synthesis of the hydroxymethylpyrimidine phosphate (HMP-P) moiety of thiamine from aminoimidazole ribotide (AIR) in a radical S-adenosyl-L-methionine (SAM)-dependent reaction. The polypeptide is Phosphomethylpyrimidine synthase (Anaeromyxobacter dehalogenans (strain 2CP-1 / ATCC BAA-258)).